We begin with the raw amino-acid sequence, 315 residues long: DNA-directed RNA polymerase subunit alpha (315 aa).

The interval 1-228 (MLEIEKPKIE…EHFKLFMTLT (228 aa)) is alpha N-terminal domain (alpha-NTD). The interval 245–315 (KEKVLEMTIE…LELGLKQSEE (71 aa)) is alpha C-terminal domain (alpha-CTD).

It belongs to the RNA polymerase alpha chain family. As to quaternary structure, homodimer. The RNAP catalytic core consists of 2 alpha, 1 beta, 1 beta' and 1 omega subunit. When a sigma factor is associated with the core the holoenzyme is formed, which can initiate transcription.

It catalyses the reaction RNA(n) + a ribonucleoside 5'-triphosphate = RNA(n+1) + diphosphate. Its function is as follows. DNA-dependent RNA polymerase catalyzes the transcription of DNA into RNA using the four ribonucleoside triphosphates as substrates. The protein is DNA-directed RNA polymerase subunit alpha of Clostridium tetani (strain Massachusetts / E88).